We begin with the raw amino-acid sequence, 491 residues long: Regulatory protein NPR5 (491 aa).

The region spanning 26 to 116 is the BTB domain; that stretch reads SDVTFSVEGR…LYSGQVSIVP (91 aa). A C2HC NPR-type zinc finger spans residues 122-136; sequence RPNCGERGCWHTHCS. Positions 125, 130, 132, and 135 each coordinate Zn(2+). ANK repeat units lie at residues 254 to 283, 284 to 313, 318 to 347, and 351 to 385; these read QKIR…LNLD, ESLA…DVNY, AGKT…DPNV, and GGIT…KLRL. The segment at 400–491 is disordered; it reads EEGNNSNNQN…MYHHHHQHHF (92 aa). Residues 403–413 are compositionally biased toward low complexity; it reads NNSNNQNNDNN. Positions 457 to 470 are enriched in basic and acidic residues; sequence DQGDDHNSQREGMS.

The protein belongs to the plant 'ANKYRIN-BTB/POZ' family. 'NOOT-BOP-COCH-like' (NBCL) subfamily. As to quaternary structure, homodimer or heterodimer with BOP1. Interacts with PAN. Highly expressed in young floral meristem. Predominantly expressed in the boundary between floral meristem (FM) and sepal primordia.

It is found in the cytoplasm. The protein resides in the nucleus. It functions in the pathway protein modification; protein ubiquitination. In terms of biological role, may act as a substrate-specific adapter of an E3 ubiquitin-protein ligase complex (CUL3-RBX1-BTB) which mediates the ubiquitination and subsequent proteasomal degradation of target proteins. Acts redundantly with BOP2. BOP1/2 promote leaf and floral meristem fate and determinacy in a pathway targeting AP1 and AGL24. BOP1/2 act as transcriptional co-regulators through direct interaction with TGA factors, including PAN, a direct regulator of AP1. Controls lateral organ fate through positive regulation of adaxial-abaxial polarity genes ATHB-14/PHB, YAB1/FIL and YAB3, and through positive regulation of LOB domain-containing genes LOB, LBD6/AS2 and LBD36. Promotes and maintains a developmentally determinate state in leaf cells through the negative regulation of JAG, JGL and class I KNOX genes. Is also involved in nectary development, formation of normal abscission zones (AZs) and suppression of bract formation, probably by regulating the cell wall disorganization. This is Regulatory protein NPR5 from Arabidopsis thaliana (Mouse-ear cress).